The chain runs to 621 residues: uncharacterized protein (621 aa).

It is found in the plastid. The protein resides in the chloroplast. This is an uncharacterized protein from Porphyra purpurea (Red seaweed).